We begin with the raw amino-acid sequence, 305 residues long: MRIVFMGTPGFAEVILRALVENKNNHIEVVGLFTQMDKPFGRKKELKAPETKTYILENHLNIPIFQPQSLKEPEVQILKDLKPDFIVVVAYGKILPKEVLTIAPCINAHASLLPKYRGASPIHEMILNDDRIYGISTMLMDLELDSGDILESASFLREDYLDLDALSLKLAHMGADLLFSTLKNFSSITRKPQDHMQATFCKKITKADGLVGFKDAKSLFLKSLAFKSWPEIFLENSLKLLEVGLVENEKSHKEGEILEIDEKGVLVGCLKGSVRVAWLQAVGKKPLKAKDYLNGRRLKIGGILA.

A (6S)-5,6,7,8-tetrahydrofolate-binding site is contributed by 111 to 114; sequence SLLP.

The protein belongs to the Fmt family.

It carries out the reaction L-methionyl-tRNA(fMet) + (6R)-10-formyltetrahydrofolate = N-formyl-L-methionyl-tRNA(fMet) + (6S)-5,6,7,8-tetrahydrofolate + H(+). Attaches a formyl group to the free amino group of methionyl-tRNA(fMet). The formyl group appears to play a dual role in the initiator identity of N-formylmethionyl-tRNA by promoting its recognition by IF2 and preventing the misappropriation of this tRNA by the elongation apparatus. This Helicobacter pylori (strain HPAG1) protein is Methionyl-tRNA formyltransferase.